The following is a 523-amino-acid chain: Alpha,alpha-trehalose-phosphate synthase [UDP-forming] (523 aa).

2 residues coordinate D-glucose 6-phosphate: Tyr-98 and Asp-152. 2 residues coordinate UDP: Arg-288 and Lys-293. UDP-alpha-D-glucose contacts are provided by Arg-288 and Lys-293. Position 326 (Arg-326) interacts with D-glucose 6-phosphate. Residue 387–395 (DGMNLVSYE) participates in UDP-alpha-D-glucose binding. 391 to 395 (LVSYE) serves as a coordination point for UDP. A disordered region spans residues 503–523 (QQFNLGEQREEGRLEPGEFDD). Residues 509-523 (EQREEGRLEPGEFDD) show a composition bias toward basic and acidic residues.

Belongs to the glycosyltransferase 20 family.

The enzyme catalyses D-glucose 6-phosphate + UDP-alpha-D-glucose = alpha,alpha-trehalose 6-phosphate + UDP + H(+). It functions in the pathway carbohydrate biosynthesis. Its function is as follows. Synthase catalytic subunit of the trehalose synthase complex that catalyzes the production of trehalose from glucose-6-phosphate and UDP-alpha-D-glucose in a two step process. The disaccharide trehalose serves as a storage carbohydrate that is mobilized during conidial germination. Trehalose also serves as a protectant for cell integrity during stress. The protein is Alpha,alpha-trehalose-phosphate synthase [UDP-forming] of Botryotinia fuckeliana (strain B05.10) (Noble rot fungus).